Here is a 365-residue protein sequence, read N- to C-terminus: tRNA/tmRNA (uracil-C(5))-methyltransferase (365 aa).

The S-adenosyl-L-methionine site is built by Gln-188, Tyr-216, Asn-221, Glu-237, and Asp-297. The active-site Nucleophile is Cys-322. The active-site Proton acceptor is the Glu-356.

The protein belongs to the class I-like SAM-binding methyltransferase superfamily. RNA M5U methyltransferase family. TrmA subfamily.

The catalysed reaction is uridine(54) in tRNA + S-adenosyl-L-methionine = 5-methyluridine(54) in tRNA + S-adenosyl-L-homocysteine + H(+). It catalyses the reaction uridine(341) in tmRNA + S-adenosyl-L-methionine = 5-methyluridine(341) in tmRNA + S-adenosyl-L-homocysteine + H(+). Its function is as follows. Dual-specificity methyltransferase that catalyzes the formation of 5-methyluridine at position 54 (m5U54) in all tRNAs, and that of position 341 (m5U341) in tmRNA (transfer-mRNA). The polypeptide is tRNA/tmRNA (uracil-C(5))-methyltransferase (Aggregatibacter aphrophilus (strain NJ8700) (Haemophilus aphrophilus)).